A 120-amino-acid polypeptide reads, in one-letter code: Chaperonin GroEL (120 aa).

Asp23–Thr27 is a binding site for ATP.

Belongs to the chaperonin (HSP60) family. As to quaternary structure, forms a cylinder of 14 subunits composed of two heptameric rings stacked back-to-back. Interacts with the co-chaperonin GroES.

Its subcellular location is the cytoplasm. The catalysed reaction is ATP + H2O + a folded polypeptide = ADP + phosphate + an unfolded polypeptide.. Together with its co-chaperonin GroES, plays an essential role in assisting protein folding. The GroEL-GroES system forms a nano-cage that allows encapsulation of the non-native substrate proteins and provides a physical environment optimized to promote and accelerate protein folding. The chain is Chaperonin GroEL from Mycolicibacterium chitae (Mycobacterium chitae).